The sequence spans 348 residues: NADH-quinone oxidoreductase subunit H (348 aa).

8 consecutive transmembrane segments (helical) span residues 21 to 41 (IAGI…VIYV), 87 to 107 (GIFL…WAVI), 120 to 140 (VGLL…VMAG), 166 to 186 (IGFI…SEIV), 195 to 215 (GIVN…LFFI), 258 to 278 (NILL…LPPI), 288 to 308 (GFLW…WIWA), and 325 to 345 (VFLP…MATG).

This sequence belongs to the complex I subunit 1 family. In terms of assembly, NDH-1 is composed of 14 different subunits. Subunits NuoA, H, J, K, L, M, N constitute the membrane sector of the complex.

It localises to the cell inner membrane. It carries out the reaction a quinone + NADH + 5 H(+)(in) = a quinol + NAD(+) + 4 H(+)(out). In terms of biological role, NDH-1 shuttles electrons from NADH, via FMN and iron-sulfur (Fe-S) centers, to quinones in the respiratory chain. The immediate electron acceptor for the enzyme in this species is believed to be ubiquinone. Couples the redox reaction to proton translocation (for every two electrons transferred, four hydrogen ions are translocated across the cytoplasmic membrane), and thus conserves the redox energy in a proton gradient. This subunit may bind ubiquinone. This Erythrobacter litoralis (strain HTCC2594) protein is NADH-quinone oxidoreductase subunit H.